Reading from the N-terminus, the 237-residue chain is Ubiquinone biosynthesis O-methyltransferase (237 aa).

Residues Arg-38, Gly-58, Asp-79, and Met-124 each coordinate S-adenosyl-L-methionine.

Belongs to the methyltransferase superfamily. UbiG/COQ3 family.

The enzyme catalyses a 3-demethylubiquinol + S-adenosyl-L-methionine = a ubiquinol + S-adenosyl-L-homocysteine + H(+). The catalysed reaction is a 3-(all-trans-polyprenyl)benzene-1,2-diol + S-adenosyl-L-methionine = a 2-methoxy-6-(all-trans-polyprenyl)phenol + S-adenosyl-L-homocysteine + H(+). The protein operates within cofactor biosynthesis; ubiquinone biosynthesis. Functionally, O-methyltransferase that catalyzes the 2 O-methylation steps in the ubiquinone biosynthetic pathway. The sequence is that of Ubiquinone biosynthesis O-methyltransferase from Acinetobacter baumannii (strain AB307-0294).